We begin with the raw amino-acid sequence, 1461 residues long: Calmodulin-regulated spectrin-associated protein 2 (1461 aa).

The Calponin-homology (CH) domain maps to 211-324 (PGGQKARYRK…FMAELFWWFE (114 aa)). A disordered region spans residues 361 to 389 (RDSSSSSDFSSRYTRPQTHSSASGGIRRS). Composition is skewed to low complexity over residues 362-371 (DSSSSSDFSS) and 380-389 (SSASGGIRRS). 2 positions are modified to phosphoserine: Ser391 and Ser393. A Phosphothreonine modification is found at Thr401. Residues Ser439, Ser572, Ser573, Ser585, and Ser647 each carry the phosphoserine modification. Disordered stretches follow at residues 573–613 (SPDN…EDSS) and 639–704 (ASNP…GSEL). Thr652 carries the post-translational modification Phosphothreonine. Ser654 bears the Phosphoserine mark. A compositionally biased stretch (low complexity) spans 654 to 673 (STKSQPGSSASSSSGVKMTS). Over residues 677–687 (QKFRKLNHTDG) the composition is skewed to basic and acidic residues. A coiled-coil region spans residues 730-767 (LLASEMVHLRMRLEEKRRAIEAQKKKMEAAFTKQRQKM). Residues 787–826 (REEAAGAEDEKVYTDRAKERESQKMDGQRSKSLADIKESM) show a composition bias toward basic and acidic residues. The interval 787 to 855 (REEAAGAEDE…QWNLTSPSEE (69 aa)) is disordered. Phosphoserine is present on Ser836. Residues 861-900 (EILEYTKSIEKLNSSLHFLQQEMQRLSLQQEMLMQMREQQ) adopt a coiled-coil conformation. The interval 896–1007 (MREQQAWVIS…IQTRSFVCFG (112 aa)) is MBD region. Phosphoserine occurs at positions 905 and 910. Disordered stretches follow at residues 921–992 (RQAG…RRFS), 1004–1044 (VCFG…GEKE), 1069–1090 (NEDQLSQPTEPPPKPVFPPTAP), 1102–1124 (DLKPPEKADVSVEKLDGESDKEQ), and 1163–1321 (KETQ…EYTG). The span at 926 to 937 (SSAAAPFSSDSP) shows a compositional bias: low complexity. Over residues 943-962 (SPQSSTRKSASFSVKNQRTP) the composition is skewed to polar residues. Phosphothreonine occurs at positions 970, 975, and 977. Residues Ser981 and Ser992 each carry the phosphoserine modification. Residues 1011 to 1028 (EPQKEPKQKEEIKKEPSE) show a composition bias toward basic and acidic residues. Residues 1077 to 1089 (TEPPPKPVFPPTA) are compositionally biased toward pro residues. Composition is skewed to basic and acidic residues over residues 1104 to 1124 (KPPEKADVSVEKLDGESDKEQ) and 1163 to 1224 (KETQ…DTVI). At Ser1120 the chain carries Phosphoserine. Residues 1138–1210 (KDDQKAENDM…REFIRQEYMR (73 aa)) are a coiled coil. Polar residues predominate over residues 1259–1271 (SSLSLASLNTGDS). Phosphoserine occurs at positions 1285, 1291, and 1293. Positions 1306 to 1318 (NASTTSSVASGTE) are enriched in polar residues. Positions 1321–1455 (GPKLYKEPSA…QTKRPVTPKK (135 aa)) constitute a CKK domain.

This sequence belongs to the CAMSAP1 family. As to quaternary structure, interacts with CAMSAP3. Interacts with KATNA1 and KATNB1; leading to regulate the length of CAMSAP2-decorated microtubule stretches. Interacts with a complex formed by AKAP9 and PDE4DIP isoform 2/MMG8/SMYLE, which recruits CAMSAP2 to the Golgi. Interacts with MAPRE1/EB1.

The protein resides in the cytoplasm. It localises to the cytoskeleton. The protein localises to the golgi apparatus. Its subcellular location is the cilium basal body. Key microtubule-organizing protein that specifically binds the minus-end of non-centrosomal microtubules and regulates their dynamics and organization. Specifically recognizes growing microtubule minus-ends and autonomously decorates and stabilizes microtubule lattice formed by microtubule minus-end polymerization. Acts on free microtubule minus-ends that are not capped by microtubule-nucleating proteins or other factors and protects microtubule minus-ends from depolymerization. In addition, it also reduces the velocity of microtubule polymerization. Through the microtubule cytoskeleton, also regulates the organization of cellular organelles including the Golgi and the early endosomes. Essential for the tethering, but not for nucleation of non-centrosomal microtubules at the Golgi: together with Golgi-associated proteins AKAP9 and PDE4DIP, required to tether non-centrosomal minus-end microtubules to the Golgi, an important step for polarized cell movement. Also acts as a regulator of neuronal polarity and development: localizes to non-centrosomal microtubule minus-ends in neurons and stabilizes non-centrosomal microtubules, which is required for neuronal polarity, axon specification and dendritic branch formation. Through the microtubule cytoskeleton, regulates the autophagosome transport. This chain is Calmodulin-regulated spectrin-associated protein 2, found in Mus musculus (Mouse).